Reading from the N-terminus, the 374-residue chain is UDP-N-acetylglucosamine--N-acetylmuramyl-(pentapeptide) pyrophosphoryl-undecaprenol N-acetylglucosamine transferase (374 aa).

Residues 13–15 (TGG), Asn124, Arg165, Ser193, and Gln294 each bind UDP-N-acetyl-alpha-D-glucosamine.

It belongs to the glycosyltransferase 28 family. MurG subfamily.

It is found in the cell inner membrane. It catalyses the reaction di-trans,octa-cis-undecaprenyl diphospho-N-acetyl-alpha-D-muramoyl-L-alanyl-D-glutamyl-meso-2,6-diaminopimeloyl-D-alanyl-D-alanine + UDP-N-acetyl-alpha-D-glucosamine = di-trans,octa-cis-undecaprenyl diphospho-[N-acetyl-alpha-D-glucosaminyl-(1-&gt;4)]-N-acetyl-alpha-D-muramoyl-L-alanyl-D-glutamyl-meso-2,6-diaminopimeloyl-D-alanyl-D-alanine + UDP + H(+). It participates in cell wall biogenesis; peptidoglycan biosynthesis. Its function is as follows. Cell wall formation. Catalyzes the transfer of a GlcNAc subunit on undecaprenyl-pyrophosphoryl-MurNAc-pentapeptide (lipid intermediate I) to form undecaprenyl-pyrophosphoryl-MurNAc-(pentapeptide)GlcNAc (lipid intermediate II). The chain is UDP-N-acetylglucosamine--N-acetylmuramyl-(pentapeptide) pyrophosphoryl-undecaprenol N-acetylglucosamine transferase from Rhizobium leguminosarum bv. trifolii (strain WSM2304).